We begin with the raw amino-acid sequence, 899 residues long: MADESSSPATGDPNSQKPESTTPISIPNPNPNPSLTPPPPQQHSQPPVAPLVPPGPPYAPPAQIPSSLLPTNLPPPPPFRPGMQFTPVANFQNPSSGVPPPGSMPQYQPQPGMRPFQPMANGYPGIHGVAPPGAMPPHGLLRYPSPYPTMVRPGFIMRPPGTIGAVQLAPRPLIPGMPGLRPVMPPMVRPASLPFVTPAEKPQTTIYIGKIATVENDFMMSILEFCGHVKSCLRAEDPTTKKPKGFGFYEFESAEGILRAIRLLTQRTIDGQELLVNVNQATKEYLLKYVEKKIETAKKAKESQGTKENQAEGPESEQDKLESADNETGKDGESKIKENIDIANSAVLTDEEREADREAMEKIETAIEERLKSNPLPPPPPPPADGSGMEFAFKSKDGDSNTDVARSDAAANDVETSGEHNRPDTSSPDWSKRNDRRSRERGEKEQEMDRYEREAERERSRKEREQRRKLEDAERAYQTRLRQWERREREKEKERQYEKEKEKEKERKRKKEIRYEEEEEEDDDDSRRRWHRAALDERRRRQLREKEDDLADRLKEEEEVAEAKRSAEEQNLQQQQLDALRILSGQAAIGSETVQTSPIENDHKATLQTVGESANEHHAADFEENGSGNESMAIDNNSGSEAHAPSKKLGFGLVGSGKRTSVPSVFYEEDEDEARKAKKMKPLVPIDYSTEEQEAVAHGGSGNTPPHLALAAEFAKRISSTNPKEETIETEKQRSRRSHDKASHRDRERERERDRDRDRVRDRGDGHSGPTKDAKESGKAKIIDTKFLDAKQLIDTIPKTKEDLFSYEINWAMYDKHQVHERMRPWISKKIMEFLGEEEATLVDFIVSNTQQHVQASQMLELLQSILDEEAEMFVLKMWRMLIFEIKRVEAGVPVKSKA.

Positions methionine 1 to serine 20 are enriched in polar residues. Residues methionine 1–glycine 112 form a disordered region. Residues isoleucine 26–glutamine 63 are compositionally biased toward pro residues. The 78-residue stretch at threonine 204–alanine 281 folds into the RRM domain. Disordered regions lie at residues lysine 298–leucine 572 and glycine 611–glycine 778. Basic and acidic residues-rich tracts occupy residues glutamate 317–isoleucine 340 and glutamate 354–lysine 372. The span at proline 375–alanine 384 shows a compositional bias: pro residues. Positions tryptophan 430–lysine 505 are enriched in basic and acidic residues. The stretch at asparagine 434–aspartate 578 forms a coiled coil. The span at tyrosine 515 to aspartate 524 shows a compositional bias: acidic residues. A Nuclear localization signal 1 motif is present at residues serine 526–alanine 533. Positions alanine 533–glutamate 568 are enriched in basic and acidic residues. Polar residues predominate over residues glycine 626 to serine 640. 2 stretches are compositionally biased toward basic and acidic residues: residues proline 723–glutamine 733 and aspartate 740–glycine 778. The short motif at serine 735–alanine 742 is the Nuclear localization signal 2 element. Residues glutamate 802 to alanine 899 enclose the PWI domain.

Specifically associates with functional splicing complexes. Associates with exon junction complex (EJC) proteins. Phosphorylated; the phosphorylation level is repressed by abscisic acid (ABA).

Its subcellular location is the nucleus. Functionally, RNA-binding protein that acts as a regulator of alternative pre-mRNA splicing. Negative regulator of responses to abscisic acid (ABA), including in early development. The chain is RNA-binding motif protein 25 from Arabidopsis thaliana (Mouse-ear cress).